The following is a 225-amino-acid chain: Ribonuclease HII (225 aa).

Residues 35-225 (GLVAGVDEVG…SFRPCQISLD (191 aa)) form the RNase H type-2 domain. 3 residues coordinate a divalent metal cation: Asp41, Glu42, and Asp137.

This sequence belongs to the RNase HII family. The cofactor is Mn(2+). Mg(2+) is required as a cofactor.

Its subcellular location is the cytoplasm. It carries out the reaction Endonucleolytic cleavage to 5'-phosphomonoester.. Functionally, endonuclease that specifically degrades the RNA of RNA-DNA hybrids. The chain is Ribonuclease HII from Trichormus variabilis (strain ATCC 29413 / PCC 7937) (Anabaena variabilis).